The following is a 629-amino-acid chain: tRNA uridine 5-carboxymethylaminomethyl modification enzyme MnmG (629 aa).

Residues 14 to 19, Val126, and Ser181 contribute to the FAD site; that span reads GAGHAG. 273-287 lines the NAD(+) pocket; that stretch reads GPRYCPSIEDKVVRF. Gln370 contacts FAD.

Belongs to the MnmG family. In terms of assembly, homodimer. Heterotetramer of two MnmE and two MnmG subunits. FAD serves as cofactor.

The protein resides in the cytoplasm. Its function is as follows. NAD-binding protein involved in the addition of a carboxymethylaminomethyl (cmnm) group at the wobble position (U34) of certain tRNAs, forming tRNA-cmnm(5)s(2)U34. The polypeptide is tRNA uridine 5-carboxymethylaminomethyl modification enzyme MnmG (Geobacillus kaustophilus (strain HTA426)).